Here is a 20-residue protein sequence, read N- to C-terminus: Cytochrome c oxidase subunit 6A1, mitochondrial (20 aa).

This sequence belongs to the cytochrome c oxidase subunit 6A family. In terms of assembly, component of the cytochrome c oxidase (complex IV, CIV), a multisubunit enzyme composed of 14 subunits. The complex is composed of a catalytic core of 3 subunits MT-CO1, MT-CO2 and MT-CO3, encoded in the mitochondrial DNA, and 11 supernumerary subunits COX4I, COX5A, COX5B, COX6A, COX6B, COX6C, COX7A, COX7B, COX7C, COX8 and NDUFA4, which are encoded in the nuclear genome. The complex exists as a monomer or a dimer and forms supercomplexes (SCs) in the inner mitochondrial membrane with NADH-ubiquinone oxidoreductase (complex I, CI) and ubiquinol-cytochrome c oxidoreductase (cytochrome b-c1 complex, complex III, CIII), resulting in different assemblies (supercomplex SCI(1)III(2)IV(1) and megacomplex MCI(2)III(2)IV(2)). In terms of tissue distribution, liver specific isoform.

Its subcellular location is the mitochondrion inner membrane. Its pathway is energy metabolism; oxidative phosphorylation. In terms of biological role, component of the cytochrome c oxidase, the last enzyme in the mitochondrial electron transport chain which drives oxidative phosphorylation. The respiratory chain contains 3 multisubunit complexes succinate dehydrogenase (complex II, CII), ubiquinol-cytochrome c oxidoreductase (cytochrome b-c1 complex, complex III, CIII) and cytochrome c oxidase (complex IV, CIV), that cooperate to transfer electrons derived from NADH and succinate to molecular oxygen, creating an electrochemical gradient over the inner membrane that drives transmembrane transport and the ATP synthase. Cytochrome c oxidase is the component of the respiratory chain that catalyzes the reduction of oxygen to water. Electrons originating from reduced cytochrome c in the intermembrane space (IMS) are transferred via the dinuclear copper A center (CU(A)) of subunit 2 and heme A of subunit 1 to the active site in subunit 1, a binuclear center (BNC) formed by heme A3 and copper B (CU(B)). The BNC reduces molecular oxygen to 2 water molecules unsing 4 electrons from cytochrome c in the IMS and 4 protons from the mitochondrial matrix. This is Cytochrome c oxidase subunit 6A1, mitochondrial (COX6A1) from Ovis aries (Sheep).